A 1681-amino-acid polypeptide reads, in one-letter code: Probable clathrin heavy chain 1 (1681 aa).

7 WD40-like repeat regions span residues 22–65 (NITF…RPIS), 66–105 (ADSV…NVED), 106–147 (VVYW…QSLA), 148–193 (GTQI…QPIE), 194–255 (GHAA…ADTA), 256–299 (GDFP…ISTD), and 300–328 (TVFV…VSID). 7 CHCR repeats span residues 539-685 (SENG…QVVV), 688-830 (ASKY…SEDA), 835-974 (IINT…QLID), 981-1126 (LSET…VKEA), 1130-1271 (FIKA…FRLA), 1276-1422 (LHIV…LLLN), and 1425-1568 (LTVL…YDCF). The segment covering 1616–1628 (ERSEHERKEEKAE) has biased composition (basic and acidic residues). The segment at 1616–1635 (ERSEHERKEEKAEQQQNNGM) is disordered.

This sequence belongs to the clathrin heavy chain family. In terms of assembly, clathrin triskelions, composed of 3 heavy chains and 3 light chains, are the basic subunits of the clathrin coat. May interact with beta arrestin arr-1.

The protein resides in the cytoplasmic vesicle membrane. It is found in the membrane. The protein localises to the coated pit. Its function is as follows. Clathrin is the major protein of the polyhedral coat of coated pits and vesicles. May play a role in yolk protein clatherin-mediated endocytosis by oocytes during oogenesis. The sequence is that of Probable clathrin heavy chain 1 (chc-1) from Caenorhabditis elegans.